Consider the following 271-residue polypeptide: Putative pyruvate, phosphate dikinase regulatory protein (271 aa).

Residue 153 to 160 (GVSRTSKT) coordinates ADP.

It belongs to the pyruvate, phosphate/water dikinase regulatory protein family. PDRP subfamily.

It catalyses the reaction N(tele)-phospho-L-histidyl/L-threonyl-[pyruvate, phosphate dikinase] + ADP = N(tele)-phospho-L-histidyl/O-phospho-L-threonyl-[pyruvate, phosphate dikinase] + AMP + H(+). The enzyme catalyses N(tele)-phospho-L-histidyl/O-phospho-L-threonyl-[pyruvate, phosphate dikinase] + phosphate + H(+) = N(tele)-phospho-L-histidyl/L-threonyl-[pyruvate, phosphate dikinase] + diphosphate. Its function is as follows. Bifunctional serine/threonine kinase and phosphorylase involved in the regulation of the pyruvate, phosphate dikinase (PPDK) by catalyzing its phosphorylation/dephosphorylation. The protein is Putative pyruvate, phosphate dikinase regulatory protein of Shouchella clausii (strain KSM-K16) (Alkalihalobacillus clausii).